A 235-amino-acid chain; its full sequence is Interleukin-34 (235 aa).

An N-terminal signal peptide occupies residues 1–20 (MPWGLAWLYCLGILLDVALG). N-linked (GlcNAc...) asparagine glycosylation occurs at Asn100.

This sequence belongs to the IL-34 family. In terms of assembly, homodimer. Interacts with CSF1R.

It localises to the secreted. In terms of biological role, cytokine that promotes the proliferation, survival and differentiation of monocytes and macrophages. Promotes the release of pro-inflammatory chemokines, and thereby plays an important role in innate immunity and in inflammatory processes. Plays an important role in the regulation of osteoclast proliferation and differentiation, and in the regulation of bone resorption. Signaling via CSF1R and its downstream effectors stimulates phosphorylation of MAPK1/ERK2 AND MAPK3/ERK1. In Mus musculus (Mouse), this protein is Interleukin-34 (Il34).